The chain runs to 619 residues: Dihydroxy-acid dehydratase (619 aa).

D81 contacts Mg(2+). C122 lines the [2Fe-2S] cluster pocket. D123 and K124 together coordinate Mg(2+). K124 carries the N6-carboxylysine modification. C195 is a binding site for [2Fe-2S] cluster. Mg(2+) is bound at residue E491. The active-site Proton acceptor is S517.

This sequence belongs to the IlvD/Edd family. As to quaternary structure, homodimer. Requires [2Fe-2S] cluster as cofactor. It depends on Mg(2+) as a cofactor.

It carries out the reaction (2R)-2,3-dihydroxy-3-methylbutanoate = 3-methyl-2-oxobutanoate + H2O. The catalysed reaction is (2R,3R)-2,3-dihydroxy-3-methylpentanoate = (S)-3-methyl-2-oxopentanoate + H2O. Its pathway is amino-acid biosynthesis; L-isoleucine biosynthesis; L-isoleucine from 2-oxobutanoate: step 3/4. It participates in amino-acid biosynthesis; L-valine biosynthesis; L-valine from pyruvate: step 3/4. In terms of biological role, functions in the biosynthesis of branched-chain amino acids. Catalyzes the dehydration of (2R,3R)-2,3-dihydroxy-3-methylpentanoate (2,3-dihydroxy-3-methylvalerate) into 2-oxo-3-methylpentanoate (2-oxo-3-methylvalerate) and of (2R)-2,3-dihydroxy-3-methylbutanoate (2,3-dihydroxyisovalerate) into 2-oxo-3-methylbutanoate (2-oxoisovalerate), the penultimate precursor to L-isoleucine and L-valine, respectively. This Sphingopyxis alaskensis (strain DSM 13593 / LMG 18877 / RB2256) (Sphingomonas alaskensis) protein is Dihydroxy-acid dehydratase.